The chain runs to 317 residues: Olfactory receptor 1B1 (317 aa).

At 1 to 29 the chain is on the extracellular side; it reads MSFAPNASHSPVFLLLGFSRANISYTLLF. Asn-6 and Asn-22 each carry an N-linked (GlcNAc...) asparagine glycan. Residues 30–50 form a helical membrane-spanning segment; it reads FLFLAIYLTTILGNVTLVLLI. Residues 51–66 lie on the Cytoplasmic side of the membrane; the sequence is SWDSRLHSPMYYLLRG. Residues 67 to 87 traverse the membrane as a helical segment; it reads LSVIDMGLSTVTLPQLLAHLV. At 88-98 the chain is on the extracellular side; that stretch reads SHYPTIPAARC. A disulfide bridge links Cys-98 with Cys-184. Residues 99–119 form a helical membrane-spanning segment; that stretch reads LAQFFFFYAFGVTDTLVIAVM. The Cytoplasmic segment spans residues 120 to 144; the sequence is ALDRYVAICDPLHYALVMNHQRCAC. The chain crosses the membrane as a helical span at residues 145-165; it reads LLALSWVVSILHTMLRVGLVL. Over 166-201 the chain is Extracellular; it reads PLCWTGDAGGNVNLPHFFCDHRPLLRASCSDIHSNE. Residues 202-222 form a helical membrane-spanning segment; it reads LAIFFEGGFLMLGPCALIVLS. Topologically, residues 223 to 248 are cytoplasmic; the sequence is YVRIGAAILRLPSAAGRRRAVSTCGS. The chain crosses the membrane as a helical span at residues 249–269; the sequence is HLTMVGFLYGTIICVYFQPPF. Over 270 to 276 the chain is Extracellular; the sequence is QNSQYQD. Residues 277-297 traverse the membrane as a helical segment; the sequence is MVASVMYTAITPLANPFVYSL. The Cytoplasmic portion of the chain corresponds to 298 to 317; sequence HNKDVKGALCRLLEWVKVDP.

This sequence belongs to the G-protein coupled receptor 1 family.

Its subcellular location is the cell membrane. Odorant receptor. The protein is Olfactory receptor 1B1 (OR1B1) of Homo sapiens (Human).